Consider the following 575-residue polypeptide: Proline--tRNA ligase (575 aa).

The protein belongs to the class-II aminoacyl-tRNA synthetase family. ProS type 1 subfamily. Homodimer.

The protein localises to the cytoplasm. It catalyses the reaction tRNA(Pro) + L-proline + ATP = L-prolyl-tRNA(Pro) + AMP + diphosphate. Catalyzes the attachment of proline to tRNA(Pro) in a two-step reaction: proline is first activated by ATP to form Pro-AMP and then transferred to the acceptor end of tRNA(Pro). As ProRS can inadvertently accommodate and process non-cognate amino acids such as alanine and cysteine, to avoid such errors it has two additional distinct editing activities against alanine. One activity is designated as 'pretransfer' editing and involves the tRNA(Pro)-independent hydrolysis of activated Ala-AMP. The other activity is designated 'posttransfer' editing and involves deacylation of mischarged Ala-tRNA(Pro). The misacylated Cys-tRNA(Pro) is not edited by ProRS. This Anaeromyxobacter sp. (strain Fw109-5) protein is Proline--tRNA ligase.